A 246-amino-acid polypeptide reads, in one-letter code: Virulence plasmid protein pGP6-D (246 aa).

It belongs to the UPF0137 (pGP6-D) family.

This Chlamydia muridarum (strain MoPn / Nigg) protein is Virulence plasmid protein pGP6-D.